Here is a 265-residue protein sequence, read N- to C-terminus: MSSPSFPRVLIFDSGVGGLSVYREIEARLPQLNYIYLFDNAAYPYGELTQETLIARVDTLVTRMVEQERIDLVVIACNTASTIVLPVLRAKLTIPVVGVVPAIKPASLIASKAIGLIATPATVKRQYTQELIRDFSANKNVELLGSTRLVNMAEEKLRGKPLDLEELASILQPLKNTIDVAVLGCTHFPLIKEEIQQVLGEQVQLIDSGLAIARRVQELLGIEQAVGAKQKHRIYASAPPWEESALNIKLEQLGFNPVQPFLHPI.

Substrate is bound by residues 13–14 (DS) and 45–46 (YG). Cys77 serves as the catalytic Proton donor/acceptor. Residue 78 to 79 (NT) coordinates substrate. Cys185 (proton donor/acceptor) is an active-site residue. Position 186-187 (186-187 (TH)) interacts with substrate.

Belongs to the aspartate/glutamate racemases family.

The catalysed reaction is L-glutamate = D-glutamate. It participates in cell wall biogenesis; peptidoglycan biosynthesis. Its function is as follows. Provides the (R)-glutamate required for cell wall biosynthesis. This Vibrio cholerae serotype O1 (strain ATCC 39315 / El Tor Inaba N16961) protein is Glutamate racemase.